A 204-amino-acid chain; its full sequence is NAD(P)H-quinone oxidoreductase subunit M, chloroplastic (204 aa).

A chloroplast-targeting transit peptide spans 1–27; it reads MASTSMSLTRACKVHAVLACSIPSVSS.

It belongs to the NDH complex subunit M family. As to quaternary structure, part of the chloroplast NDH complex, composed of a mixture of chloroplast and nucleus encoded subunits. Component of the NDH subcomplex A, at least composed of ndhH, ndhI, ndhJ, ndhK, ndhL, ndhM, ndhN and ndhO.

The protein localises to the plastid. Its subcellular location is the chloroplast thylakoid membrane. The enzyme catalyses a plastoquinone + NADH + (n+1) H(+)(in) = a plastoquinol + NAD(+) + n H(+)(out). It catalyses the reaction a plastoquinone + NADPH + (n+1) H(+)(in) = a plastoquinol + NADP(+) + n H(+)(out). In terms of biological role, NDH shuttles electrons from NAD(P)H:plastoquinone, via FMN and iron-sulfur (Fe-S) centers, to quinones in the photosynthetic chain and possibly in a chloroplast respiratory chain. The immediate electron acceptor for the enzyme in this species is believed to be plastoquinone. Couples the redox reaction to proton translocation, and thus conserves the redox energy in a proton gradient. The sequence is that of NAD(P)H-quinone oxidoreductase subunit M, chloroplastic from Physcomitrium patens (Spreading-leaved earth moss).